The chain runs to 705 residues: MKKYLAITSKGLENLLADELVALGVTDPKLVYAGVTFEAPIEVVYRCCLWSRIASRFIQILSEFDVRDDMDLYLGASAINWPNYFTADKTLVVDFNGTNREIRNSQYGALKVKDAIVDRFTKADLERPNIDKAEPDLRVHMRLSGEKGILGFDLIGSGLHQRGYRTEAGRAPLRETLAAALVLRSTWDESKPLLDPMCGSGTLLIEAALMACEMAPGVKREKWCFEALSDFDPEVWTEIRSEARVKSRRGVKKVDTHFYGFDRDYRVIQTARDNARRAGVEDLITFDVGDATKIERPEGFENGVVICNPPYGERLSTEPALIALYSEFGRQLKEQFGGCTASIYSSNDDLLACIRMRADKQFKLNNGALPCVQKNYSISESAERKEAANIEVAPEFMNRLKKNLSKLGKWARKEKLDCYRLYDADLPDYNAAIDVYKDYIIIQEYTAPKEISEDKARRRLTDMIRATVLVTGVETNNVILKVRQKQSGKNQYQKLAEKSRYFDVEEYGVKLIVNLQDYLDTGLFLDHKLTRKMIGDMAAGKDFLNLFAYTGSATVHAACGGAKSTMTIDMSRTYLEWAQKNMNTNDQTGTQHQFLQADCLQWLQQAEGEFDLIFIDPPTFSNSKRMDQTFDVQRDHIMLLENLKRMLRQDGTVVFSNNKRNFKMDEEALDKAGLQAKNISKQTLPLDFARNKHIHNCWIITHKED.

The 112-residue stretch at 43-154 (VVYRCCLWSR…GEKGILGFDL (112 aa)) folds into the THUMP domain.

The protein belongs to the methyltransferase superfamily. RlmKL family.

It is found in the cytoplasm. It carries out the reaction guanosine(2445) in 23S rRNA + S-adenosyl-L-methionine = N(2)-methylguanosine(2445) in 23S rRNA + S-adenosyl-L-homocysteine + H(+). The enzyme catalyses guanosine(2069) in 23S rRNA + S-adenosyl-L-methionine = N(2)-methylguanosine(2069) in 23S rRNA + S-adenosyl-L-homocysteine + H(+). In terms of biological role, specifically methylates the guanine in position 2445 (m2G2445) and the guanine in position 2069 (m7G2069) of 23S rRNA. This chain is Ribosomal RNA large subunit methyltransferase K/L, found in Aliivibrio salmonicida (strain LFI1238) (Vibrio salmonicida (strain LFI1238)).